A 108-amino-acid chain; its full sequence is uncharacterized protein (108 aa).

2 helical membrane passes run 32–52 and 68–88; these read YFFF…LLAI and SYLL…LVVG.

It localises to the membrane. This is an uncharacterized protein from Saccharomyces cerevisiae (strain ATCC 204508 / S288c) (Baker's yeast).